Here is a 339-residue protein sequence, read N- to C-terminus: Heat-inducible transcription repressor HrcA (339 aa).

This sequence belongs to the HrcA family.

In terms of biological role, negative regulator of class I heat shock genes (grpE-dnaK-dnaJ and groELS operons). Prevents heat-shock induction of these operons. The polypeptide is Heat-inducible transcription repressor HrcA (Paraburkholderia phytofirmans (strain DSM 17436 / LMG 22146 / PsJN) (Burkholderia phytofirmans)).